A 137-amino-acid chain; its full sequence is Large ribosomal subunit protein uL16 (137 aa).

Belongs to the universal ribosomal protein uL16 family. Part of the 50S ribosomal subunit.

In terms of biological role, binds 23S rRNA and is also seen to make contacts with the A and possibly P site tRNAs. The polypeptide is Large ribosomal subunit protein uL16 (Cellvibrio japonicus (strain Ueda107) (Pseudomonas fluorescens subsp. cellulosa)).